Consider the following 106-residue polypeptide: Large ribosomal subunit protein eL42 (106 aa).

Belongs to the eukaryotic ribosomal protein eL42 family.

The protein is Large ribosomal subunit protein eL42 (RPL44) of Candida tropicalis (Yeast).